The following is a 336-amino-acid chain: Myb family transcription factor PHL8 (336 aa).

Residues 31–91 (TDAKPRLKWT…HLQKYRLGKS (61 aa)) form the HTH myb-type domain. The segment at residues 62-87 (PKGLMKVMEIPGLTLYHLKSHLQKYR) is a DNA-binding region (H-T-H motif). Residues 100–134 (EVSSASENQEVESKNDSRDLRGCSVTEENSNPAKE) are disordered. The segment covering 110–120 (VESKNDSRDLR) has biased composition (basic and acidic residues). The stretch at 139-159 (TEALQMQMEVQKKLHEQIEVQ) forms a coiled coil. Residues 152-157 (LHEQIE) carry the LHEQLE motif.

It belongs to the MYB-CC family.

The protein localises to the nucleus. This Arabidopsis thaliana (Mouse-ear cress) protein is Myb family transcription factor PHL8.